The chain runs to 1587 residues: Sister chromatid cohesion protein mis4 (1587 aa).

A disordered region spans residues 140 to 172 (PKEKPDASSINTNRSSSDNGFLTPSSSPRSPSC). A compositionally biased stretch (polar residues) spans 147–162 (SSINTNRSSSDNGFLT). A compositionally biased stretch (low complexity) spans 163–172 (PSSSPRSPSC). The residue at position 183 (serine 183) is a Phosphoserine. HEAT repeat units lie at residues 775 to 812 (LNLK…IPSI), 814 to 851 (RTHP…AYRE), 853 to 888 (IPQI…ATED), 890 to 927 (NIRV…SPAS), 1101 to 1140 (ATLM…ARHS), and 1183 to 1220 (DAYV…RETS).

The protein belongs to the SCC2/Nipped-B family. Interacts with ssl3.

It localises to the nucleus. The protein resides in the chromosome. In terms of biological role, plays a structural role in chromatin. Chromatid cohesion molecule required for equal sister chromatid separation in anaphase. May form a stable link between chromatids in S phase that is split rather than removed in anaphase. Also required for spindle-kinetochore interaction in early mitosis and inhibit sister chromatid separation until the cleavage of Rad21 in anaphase. The protein is Sister chromatid cohesion protein mis4 (mis4) of Schizosaccharomyces pombe (strain 972 / ATCC 24843) (Fission yeast).